Consider the following 408-residue polypeptide: UPF0754 membrane protein Tery_3973 (408 aa).

A run of 2 helical transmembrane segments spans residues 4–24 and 385–405; these read IWLY…TNDI and IVNL…ILLV.

This sequence belongs to the UPF0754 family.

It localises to the cell inner membrane. This chain is UPF0754 membrane protein Tery_3973, found in Trichodesmium erythraeum (strain IMS101).